We begin with the raw amino-acid sequence, 97 residues long: MICOS complex subunit MIC12 (97 aa).

A helical membrane pass occupies residues 7 to 24; the sequence is LTSITAVSSTLAASYYFY.

Belongs to the MICOS complex subunit Mic12 family. In terms of assembly, component of the mitochondrial contact site and cristae organizing system (MICOS) complex.

The protein localises to the mitochondrion inner membrane. Its function is as follows. Component of the MICOS complex, a large protein complex of the mitochondrial inner membrane that plays crucial roles in the maintenance of crista junctions, inner membrane architecture, and formation of contact sites to the outer membrane. The chain is MICOS complex subunit MIC12 (AIM5) from Zygosaccharomyces rouxii (strain ATCC 2623 / CBS 732 / NBRC 1130 / NCYC 568 / NRRL Y-229).